A 97-amino-acid chain; its full sequence is Integration host factor subunit alpha (97 aa).

The protein belongs to the bacterial histone-like protein family. As to quaternary structure, heterodimer of an alpha and a beta chain.

This protein is one of the two subunits of integration host factor, a specific DNA-binding protein that functions in genetic recombination as well as in transcriptional and translational control. The chain is Integration host factor subunit alpha from Hydrogenovibrio crunogenus (strain DSM 25203 / XCL-2) (Thiomicrospira crunogena).